The primary structure comprises 93 residues: DNA-directed RNA polymerase subunit omega (93 aa).

Belongs to the RNA polymerase subunit omega family. As to quaternary structure, the RNAP catalytic core consists of 2 alpha, 1 beta, 1 beta' and 1 omega subunit. When a sigma factor is associated with the core the holoenzyme is formed, which can initiate transcription.

The enzyme catalyses RNA(n) + a ribonucleoside 5'-triphosphate = RNA(n+1) + diphosphate. Promotes RNA polymerase assembly. Latches the N- and C-terminal regions of the beta' subunit thereby facilitating its interaction with the beta and alpha subunits. This chain is DNA-directed RNA polymerase subunit omega, found in Corynebacterium urealyticum (strain ATCC 43042 / DSM 7109).